Here is a 291-residue protein sequence, read N- to C-terminus: Elongation factor Ts (291 aa).

The segment at 80–83 (TDFV) is involved in Mg(2+) ion dislocation from EF-Tu.

It belongs to the EF-Ts family.

The protein localises to the cytoplasm. Its function is as follows. Associates with the EF-Tu.GDP complex and induces the exchange of GDP to GTP. It remains bound to the aminoacyl-tRNA.EF-Tu.GTP complex up to the GTP hydrolysis stage on the ribosome. This chain is Elongation factor Ts, found in Acinetobacter baylyi (strain ATCC 33305 / BD413 / ADP1).